Consider the following 430-residue polypeptide: Dolichyl-diphosphooligosaccharide--protein glycosyltransferase subunit WBP1 (430 aa).

The first 20 residues, Met-1 to Gly-20, serve as a signal peptide directing secretion. Residues Ser-24–Trp-393 lie on the Lumenal side of the membrane. Asn-60 and Asn-332 each carry an N-linked (GlcNAc...) asparagine glycan. Residues Val-394–Val-414 form a helical membrane-spanning segment. Topologically, residues Thr-415 to Asn-430 are cytoplasmic.

This sequence belongs to the DDOST 48 kDa subunit family. In terms of assembly, component of the oligosaccharyltransferase (OST) complex, which appears to exist in two assemblies comprising OST1, OST2, OST4, OST5, STT3, SWP1, WPB1, and either OST3 or OST6. OST assembly occurs through the formation of 3 subcomplexes. Subcomplex 1 contains OST1 and OST5, subcomplex 2 contains STT3, OST3, and OST4, and subcomplex 3 contains OST2, WBP1, and SWP1. Interacts with SEC61, SBH1 and SSS1.

Its subcellular location is the endoplasmic reticulum membrane. It functions in the pathway protein modification; protein glycosylation. Its function is as follows. Subunit of the oligosaccharyl transferase (OST) complex that catalyzes the initial transfer of a defined glycan (Glc(3)Man(9)GlcNAc(2) in eukaryotes) from the lipid carrier dolichol-pyrophosphate to an asparagine residue within an Asn-X-Ser/Thr consensus motif in nascent polypeptide chains, the first step in protein N-glycosylation. N-glycosylation occurs cotranslationally and the complex associates with the Sec61 complex at the channel-forming translocon complex that mediates protein translocation across the endoplasmic reticulum (ER). All subunits are required for a maximal enzyme activity. In Saccharomyces cerevisiae (strain ATCC 204508 / S288c) (Baker's yeast), this protein is Dolichyl-diphosphooligosaccharide--protein glycosyltransferase subunit WBP1 (WBP1).